A 1460-amino-acid chain; its full sequence is Collagen alpha-1(I) chain (1460 aa).

Residues 1–22 (MFSFVDLRLLLLLAATALLTHG) form the signal peptide. A propeptide spans 23-157 (QEEGQEEDIP…PPGLGGNFAP (135 aa)) (N-terminal propeptide). The region spanning 34–92 (VTCVQNGLRYYDRDVWKPEACRICVCDNGNVLCDDVICDETKNCPGAQVPPGECCPVCP) is the VWFC domain. The segment at 96–1213 (ASPTDQETTG…KAHDGGRYYR (1118 aa)) is disordered. Over residues 134–149 (PGLPGPPGPPGPPGPP) the composition is skewed to pro residues. Residues 158 to 174 (QMSYGYDEKSTGGISVP) are nonhelical region (N-terminal). At K166 the chain carries Allysine. S167 is subject to Phosphoserine. The segment at 175 to 1188 (GPMGPSGPRG…PGPPGPPGPP (1014 aa)) is triple-helical region. 4-hydroxyproline occurs at positions 186, 189, 192, 201, 204, 207, 222, 237, 243, 252, and 258. Over residues 194 to 213 (PQGFQGPPGEPGEPGASGPM) the composition is skewed to low complexity. Positions 225–239 (NGDDGEAGKPGRPGE) are enriched in basic and acidic residues. K261 is modified (5-hydroxylysine; alternate). A glycan (O-linked (Gal...) hydroxylysine; alternate) is linked at K261. At S267 the chain carries Phosphoserine. A compositionally biased stretch (low complexity) spans 275–291 (DAGPAGPKGEPGSPGEN). 4-hydroxyproline is present on residues P285, P288, P294, P303, and P309. Residues 314–327 (PAGARGNDGATGAA) show a composition bias toward low complexity. Residues 329-341 (PPGPTGPAGPPGF) show a composition bias toward pro residues. 4-hydroxyproline is present on residues P330, P339, P342, P369, P372, P384, P390, P399, P405, P408, and P423. Residues 375 to 414 (AGAAGPAGNPGADGQPGAKGANGAPGIAGAPGFPGARGPS) are compositionally biased toward low complexity. The residue at position 426 (K426) is a 5-hydroxylysine. A 4-hydroxyproline mark is found at P432, P435, P447, P456, P471, P477, P486, and P492. Positions 481–490 (GERGGPGSRG) are enriched in gly residues. K501 bears the 5-hydroxylysine mark. 28 positions are modified to 4-hydroxyproline: P510, P519, P525, P531, P540, P543, P552, P561, P567, P579, P588, P597, P600, P618, P636, P642, P648, P654, P660, P666, P678, P687, P699, P711, P714, P720, P726, and P735. Over residues 534 to 560 (KGLTGSPGSPGPDGKTGPPGPAGQDGR) the composition is skewed to low complexity. Positions 569 to 588 (ARGQAGVMGFPGPKGAAGEP) are enriched in low complexity. Positions 630 to 657 (QGPAGSPGFQGLPGPAGPPGEAGKPGEQ) are enriched in low complexity. Over residues 692–720 (PRGANGAPGNDGAKGDAGAPGAPGSQGAP) the composition is skewed to low complexity. Positions 741–743 (RGD) match the Cell attachment site motif. A 5-hydroxylysine modification is found at K747. Residues P753, P768, and P774 each carry the 4-hydroxyproline modification. Residues 780–794 (AGPSGPAGPTGARGA) show a composition bias toward low complexity. Phosphoserine is present on S783. 4-hydroxyproline occurs at positions 795, 801, 804, 813, 819, 837, 846, and 855. A compositionally biased stretch (low complexity) spans 807–834 (AGFAGPPGADGQPGAKGEPGDAGAKGDA). Over residues 836–848 (PPGPAGPTGPPGP) the composition is skewed to pro residues. At K858 the chain carries 5-hydroxylysine. Residues 863 to 879 (SAGPPGATGFPGAAGRV) show a composition bias toward low complexity. A 4-hydroxyproline mark is found at P867 and P873. A 3-hydroxyproline modification is found at P881. 4-hydroxyproline occurs at positions 882, 891, 894, 915, 924, 933, 942, 960, 969, 972, 978, 993, 999, 1005, 1014, and 1020. Residues 908–917 (ETGPAGRPGE) are compositionally biased toward low complexity. Over residues 927 to 951 (AGEKGSPGADGPAGAPGTPGPQGIA) the composition is skewed to low complexity. Residues 992-1002 (PPGPMGPPGLA) are compositionally biased toward pro residues. The segment covering 1004–1019 (PPGESGREGSPGAEGS) has biased composition (low complexity). K1029 carries the 5-hydroxylysine modification. Positions 1038–1053 (AGPPGAPGAPGAPGPV) are enriched in pro residues. 4-hydroxyproline occurs at positions 1041, 1044, and 1047. Low complexity predominate over residues 1074–1088 (IGPVGARGPAGPQGP). The short motif at 1089–1091 (RGD) is the Cell attachment site element. Positions 1089 to 1103 (RGDKGETGEQGDRGI) are enriched in basic and acidic residues. A 5-hydroxylysine modification is found at K1092. Residue K1104 is modified to 5-hydroxylysine; alternate. A glycan (O-linked (Gal...) hydroxylysine; alternate) is linked at K1104. 5 positions are modified to 4-hydroxyproline: P1116, P1119, P1122, P1140, and P1155. Positions 1122–1155 (PGEQGPSGASGPAGPRGPPGSAGSPGKDGLNGLP) are enriched in low complexity. Residue P1160 is modified to 3-hydroxyproline. 4-hydroxyproline is present on P1161. Positions 1173 to 1188 (VGPPGPPGPPGPPGPP) are enriched in pro residues. 3-hydroxyproline is present on P1175. The residue at position 1176 (P1176) is a 4-hydroxyproline. Position 1178 is a 3-hydroxyproline (P1178). 4-hydroxyproline is present on P1179. At P1181 the chain carries 3-hydroxyproline. 4-hydroxyproline is present on residues P1182, P1185, and P1188. The tract at residues 1189–1214 (SGGFDFSFLPQPPQEKAHDGGRYYRA) is nonhelical region (C-terminal). Over residues 1203–1213 (EKAHDGGRYYR) the composition is skewed to basic and acidic residues. Position 1204 is an allysine (K1204). Residues 1215-1460 (DDANVVRDRD…GMDIGPVCFL (246 aa)) constitute a propeptide, C-terminal propeptide. One can recognise a Fibrillar collagen NC1 domain in the interval 1225 to 1460 (LEVDTTLKSL…GMDIGPVCFL (236 aa)). Disulfide bonds link C1255–C1287, C1295–C1458, and C1366–C1411. Ca(2+)-binding residues include D1273, N1275, Q1276, C1278, and D1281. An N-linked (GlcNAc...) asparagine glycan is attached at N1361.

The protein belongs to the fibrillar collagen family. Trimers of one alpha 2(I) and two alpha 1(I) chains. Interacts with MRC2. Interacts with TRAM2. Interacts with MFAP4 in a Ca (2+)-dependent manner. Contains mostly 4-hydroxyproline. Proline residues at the third position of the tripeptide repeating unit (G-X-Y) are hydroxylated in some or all of the chains. Post-translationally, contains 3-hydroxyproline at a few sites. This modification occurs on the first proline residue in the sequence motif Gly-Pro-Hyp, where Hyp is 4-hydroxyproline. In terms of processing, lysine residues at the third position of the tripeptide repeating unit (G-X-Y) are 5-hydroxylated in some or all of the chains. O-glycosylated on hydroxylated lysine residues. The O-linked glycan consists of a Glc-Gal disaccharide.

The protein localises to the secreted. It is found in the extracellular space. Its subcellular location is the extracellular matrix. Type I collagen is a member of group I collagen (fibrillar forming collagen). The protein is Collagen alpha-1(I) chain (COL1A1) of Canis lupus familiaris (Dog).